Here is a 129-residue protein sequence, read N- to C-terminus: Phosphoribosyl-AMP cyclohydrolase (129 aa).

D85 serves as a coordination point for Mg(2+). C86 contributes to the Zn(2+) binding site. Residues D87 and D89 each coordinate Mg(2+). Zn(2+) contacts are provided by C102 and C109.

Belongs to the PRA-CH family. Homodimer. It depends on Mg(2+) as a cofactor. Zn(2+) is required as a cofactor.

Its subcellular location is the cytoplasm. The enzyme catalyses 1-(5-phospho-beta-D-ribosyl)-5'-AMP + H2O = 1-(5-phospho-beta-D-ribosyl)-5-[(5-phospho-beta-D-ribosylamino)methylideneamino]imidazole-4-carboxamide. It participates in amino-acid biosynthesis; L-histidine biosynthesis; L-histidine from 5-phospho-alpha-D-ribose 1-diphosphate: step 3/9. Catalyzes the hydrolysis of the adenine ring of phosphoribosyl-AMP. This Methanococcus maripaludis (strain C7 / ATCC BAA-1331) protein is Phosphoribosyl-AMP cyclohydrolase.